A 307-amino-acid chain; its full sequence is Putative ankyrin repeat protein R229 (307 aa).

ANK repeat units lie at residues 135 to 164 (ASRV…DINV), 165 to 194 (DNDK…NVHA), 196 to 224 (DDEA…NVNA), 226 to 254 (NDYA…NPMA), 256 to 284 (RYYP…SMVY), and 286 to 307 (SYAM…LLLD).

This chain is Putative ankyrin repeat protein R229, found in Acanthamoeba polyphaga (Amoeba).